A 530-amino-acid chain; its full sequence is MLHLLALFLHCLPLASGDYDICKSWVTTDEGPTWEFYACQPKVMRLKDYVKVKVEPSGITCGDPPERFCSHENPYLCSNECDASNPDLAHPPRLMFDKEEEGLATYWQSITWSRYPSPLEANITLSWNKTVELTDDVVMTFEYGRPTVMVLEKSLDNGRTWQPYQFYAEDCMEAFGMSARRARDMSSSSAHRVLCTEEYSRWAGSKKEKHVRFEVRDRFAIFAGPDLRNMDNLYTRLESAKGLKEFFTLTDLRMRLLRPALGGTYVQRENLYKYFYAISNIEVIGRCKCNLHANLCSMREGSLQCECEHNTTGPDCGKCKKNFRTRSWRAGSYLPLPHGSPNACATAGSFGNCECYGHSNRCSYIDFLNVVTCVSCKHNTRGQHCQHCRLGYYRNGSAELDDENVCIECNCNQIGSVHDRCNETGFCECREGAAGPKCDDCLPTHYWRQGCYPNVCDDDQLLCQNGGTCLQNQRCACPRGYTGVRCEQPRCDPADDDGGLDCDRAPGAAPRPATLLGCLLLLGLAARLGR.

An N-terminal signal peptide occupies residues 1-17 (MLHLLALFLHCLPLASG). Cystine bridges form between Cys-22-Cys-39, Cys-61-Cys-81, and Cys-69-Cys-77. The Laminin N-terminal domain occupies 35 to 286 (EFYACQPKVM…AISNIEVIGR (252 aa)). The interval 69–88 (CSHENPYLCSNECDASNPDL) is NGL discriminant loop I. N-linked (GlcNAc...) asparagine glycans are attached at residues Asn-122 and Asn-128. Cys-171 and Cys-195 are disulfide-bonded. The interval 201 to 203 (RWA) is NGL discriminant loop II. The segment at 264-267 (TYVQ) is NGL discriminant loop III. 15 disulfide bridges follow: Cys-287–Cys-296, Cys-289–Cys-305, Cys-307–Cys-316, Cys-319–Cys-344, Cys-353–Cys-362, Cys-355–Cys-373, Cys-376–Cys-385, Cys-388–Cys-406, Cys-409–Cys-421, Cys-411–Cys-427, Cys-429–Cys-438, Cys-441–Cys-451, Cys-456–Cys-469, Cys-463–Cys-475, and Cys-477–Cys-486. 3 consecutive Laminin EGF-like domains span residues 287–346 (CKCN…ACAT), 353–408 (CECY…VCIE), and 409–453 (CNCN…GCYP). N-linked (GlcNAc...) asparagine glycosylation is present at Asn-310. N-linked (GlcNAc...) asparagine glycosylation is present at Asn-395. The N-linked (GlcNAc...) asparagine glycan is linked to Asn-422. Gly-507 is lipidated: GPI-anchor amidated glycine. Positions 508-530 (AAPRPATLLGCLLLLGLAARLGR) are cleaved as a propeptide — removed in mature form.

As to quaternary structure, interacts with LRRC4. In terms of processing, N-glycosylated.

Its subcellular location is the cell membrane. In terms of biological role, involved in controlling patterning and neuronal circuit formation at the laminar, cellular, subcellular and synaptic levels. Promotes neurite outgrowth of both axons and dendrites. The chain is Netrin-G2 from Homo sapiens (Human).